Consider the following 191-residue polypeptide: Peptidyl-tRNA hydrolase (191 aa).

Y17 lines the tRNA pocket. H22 functions as the Proton acceptor in the catalytic mechanism. TRNA-binding residues include Y68, N70, and N116.

It belongs to the PTH family. In terms of assembly, monomer.

The protein localises to the cytoplasm. The enzyme catalyses an N-acyl-L-alpha-aminoacyl-tRNA + H2O = an N-acyl-L-amino acid + a tRNA + H(+). Hydrolyzes ribosome-free peptidyl-tRNAs (with 1 or more amino acids incorporated), which drop off the ribosome during protein synthesis, or as a result of ribosome stalling. Functionally, catalyzes the release of premature peptidyl moieties from peptidyl-tRNA molecules trapped in stalled 50S ribosomal subunits, and thus maintains levels of free tRNAs and 50S ribosomes. In Francisella tularensis subsp. holarctica (strain FTNF002-00 / FTA), this protein is Peptidyl-tRNA hydrolase.